The following is a 127-amino-acid chain: MSNRKPYVREVKRTWWKDHPFYRFYMLREATVLPLILFTLFLTVGLGSLVKGPEAWQTWLNFMANPVVIAINIVALLGSLLHAHTFFSMMPQVMPIRLKGKPVDKKIIVLAQWAAVAFISLIVLIVV.

A run of 3 helical transmembrane segments spans residues 30–50 (ATVLPLILFTLFLTVGLGSLV), 67–87 (VVIAINIVALLGSLLHAHTFF), and 107–127 (IIVLAQWAAVAFISLIVLIVV).

This sequence belongs to the FrdC family. In terms of assembly, part of an enzyme complex containing four subunits: a flavoprotein (FrdA), an iron-sulfur protein (FrdB), and two hydrophobic anchor proteins (FrdC and FrdD).

Its subcellular location is the cell inner membrane. In terms of biological role, anchors the catalytic components of the fumarate reductase complex to the cell membrane, binds quinones. The protein is Fumarate reductase subunit C of Vibrio vulnificus (strain CMCP6).